The sequence spans 270 residues: Phosphatidylglycerol--prolipoprotein diacylglyceryl transferase (270 aa).

A run of 4 helical transmembrane segments spans residues 19-39 (FPVY…LWLA), 56-76 (LVLI…VIFE), 92-112 (QGGL…ILFA), and 116-136 (GVSF…GQAI). R138 serves as a coordination point for a 1,2-diacyl-sn-glycero-3-phospho-(1'-sn-glycerol). 3 helical membrane passes run 178–198 (HPTF…LLAL), 206–226 (GELF…VEGL), and 236–256 (LRIA…FIIV).

This sequence belongs to the Lgt family.

The protein localises to the cell membrane. The enzyme catalyses L-cysteinyl-[prolipoprotein] + a 1,2-diacyl-sn-glycero-3-phospho-(1'-sn-glycerol) = an S-1,2-diacyl-sn-glyceryl-L-cysteinyl-[prolipoprotein] + sn-glycerol 1-phosphate + H(+). Its pathway is protein modification; lipoprotein biosynthesis (diacylglyceryl transfer). Catalyzes the transfer of the diacylglyceryl group from phosphatidylglycerol to the sulfhydryl group of the N-terminal cysteine of a prolipoprotein, the first step in the formation of mature lipoproteins. This chain is Phosphatidylglycerol--prolipoprotein diacylglyceryl transferase, found in Bacillus anthracis (strain A0248).